The following is a 374-amino-acid chain: Putative serine/threonine-protein kinase ZK507.3 (374 aa).

Residues 25–296 (WKVIVELGKG…CKLTLKEPLV (272 aa)) enclose the Protein kinase domain. ATP-binding positions include 31–39 (LGKGGYGTV) and lysine 60. Residue aspartate 158 is the Proton acceptor of the active site. Positions 302 to 374 (NDNESGSTPT…KTRNKKPSRK (73 aa)) are disordered. Residues 306–324 (SGSTPTTSATACSPSSSTG) show a composition bias toward low complexity. Over residues 334–343 (IASNIDQKSI) the composition is skewed to polar residues. Over residues 364 to 374 (TKTRNKKPSRK) the composition is skewed to basic residues.

Belongs to the protein kinase superfamily. Ser/Thr protein kinase family.

It carries out the reaction L-seryl-[protein] + ATP = O-phospho-L-seryl-[protein] + ADP + H(+). It catalyses the reaction L-threonyl-[protein] + ATP = O-phospho-L-threonyl-[protein] + ADP + H(+). This chain is Putative serine/threonine-protein kinase ZK507.3, found in Caenorhabditis elegans.